The primary structure comprises 952 residues: MAPVAITPATLVGHDLKSSRASERATELSPVTLLDIFSRAVSLYPKHELSFVTSSAHDSSVQTRSFSEFDQYARALAWAMLAWGKPTGSVIVVYFTEHEDNMAAVWACLLAGHVPCLQPALSEQQAHKEGHVAHIKNLFSSATWLTNESGAEQVHSITGLDIRLLSELKARAETVGADFHAHQPNPDDEAILFLTSGSTGFSKVVVHTHRTILAACNAKGQSYGLTSESKTMNWVGFDHVAGSLEMHIAPLLYGASQLHVHVSAILADPSRFLRLIEEKSIQLAFAPNFLLAKLTRDLEKCSDLFGKFDLSSIKRINSGGEAVVSSTAQAFARTLKNFAKDGNASFVISAGFGTTETCAGCIYDPIDVLFTPPSYEFLELGTPLTGCEMCIVNPQDGVTPRPDGESGELQVRGPMVFVRYYNDPKATTSSFIEGVWYRTGDVGIIEKGKMRLNGRIKDTVIVHGVSYGIAELETYLQTVEGVTHSFLAAAPHRDPGQETEGFVIFYSPTFELDSEDAPAKLYATHRALRDVSVKMITLPPQQIIPIPLNQMEKTTLGKLSRVCLVNLFKQGELANHIARAEELLSIARGATFIAPSTETEKTLGRLYAEIFNLRVSDVSASDNFFELGGNSIDVIKLKREAESLFELPEILTVQILKHPVISSLAKYVDSLVSKDGSQEEYDPVVPLQLTSNKTPIFMVHPGIGEVLAYVDLAKYFQNERPFFALRVRGFEGQPLFTSMDEMASSYAAGAKRTQPHGPYAIAGYSYGGVVAFEVAKRLESMGDEVKFIGLVDIPPHIADRMHDWTSGMLNLSHLLGLMSKQDADNLAPSLRTLTRKEQFEVLWKLSPPERLTELQLTPEKHENWVYIAGGLSECGMTYQPGGSVSVLDVFYAMPPHDTKEDWLNQHLRRWADFCRSEPSFTNVPGHHDTLMDFDHVSGFQKIFRDALEARGL.

Residues 58 to 462 are adenylation (A) domain; it reads DSSVQTRSFS…NGRIKDTVIV (405 aa). Positions 594-672 constitute a Carrier domain; the sequence is APSTETEKTL…SLAKYVDSLV (79 aa). Residues 599 to 669 form a thiolation and peptide carrier (T) domain region; that stretch reads TEKTLGRLYA…VISSLAKYVD (71 aa). Ser631 carries the O-(pantetheine 4'-phosphoryl)serine modification. Residues 695–939 form a thioesterase (TE) domain region; that stretch reads PIFMVHPGIG…LMDFDHVSGF (245 aa).

It belongs to the ATP-dependent AMP-binding enzyme family.

In terms of biological role, inactive atromentin synthetase homolog. Does not accept 4-hydroxyphenylpyruvate (4-HPP) as substrate. Both the adenylation (A) and the thioesterase (TE) domain of the invA6 enzyme are inactive. This chain is Inactive atromentin synthetase invA6 (invA6), found in Paxillus involutus (Naked brimcap).